Consider the following 492-residue polypeptide: Catalase isozyme C (492 aa).

R62 is a heme binding site. H65 is an active-site residue. R102 provides a ligand contact to heme. Residue N138 is part of the active site. F151 contributes to the heme binding site. Phosphotyrosine; by STRK1 is present on Y210. A cross-link (3-(S-cysteinyl)-tyrosine (Cys-Tyr)) is located at residues 325–348 (CPGIIVPGIYYSDDKLLQTRIFSY). R344, Y348, and R355 together coordinate heme. The Peroxisome targeting signal signature appears at 484–492 (SRLSAKPSM).

It belongs to the catalase family. In terms of assembly, homotetramer. Interacts with GLO1 and GLO4; these interactions are disturbed by alpha-hydroxy-2-pyridinemethanesulfonic acid (HPMS) and salicylic acid (SA). Interacts with STRK1 at the plasma membrane. Heme is required as a cofactor. Activated by STRK1-mediated phosphorylation at Tyr-210 upon salt and oxidative stress. As to expression, highly expressed in mature leaves. Mainly expressed in leaf blades, stems, panicles, leaf sheaths, and culms, but barely in roots.

It localises to the peroxisome. The protein localises to the glyoxysome. Its subcellular location is the cell membrane. The enzyme catalyses 2 H2O2 = O2 + 2 H2O. Its activity is regulated as follows. Strongly inhibited by beta-mercaptoethanol, sodium azide and potassium cyanide. Slightly repressed by 3-amino-1,2,4-triazole (3-AT). Activity is repressed proportionally to increased concentration of NaCl, KCl, LiCl and MgCl(2). Its function is as follows. Occurs in almost all aerobically respiring organisms and serves to protect cells from the toxic effects of hydrogen peroxide. Responsible for the redox homeostasis in leaves. Prevents nitric oxide (NO) accumulation and subsequent NO-mediated leaf cell death as well as the S-nitrosylation of specific proteins (e.g. glyceraldehyde 3-phosphate dehydrogenase and thioredoxin) by degrading H(2)O(2). Involved in photorespiration. Promotes drought stress tolerance and recovery. Involved in NO-mediated enhanced tolerance to zinc oxide nanoparticles (ZnO NPs)-induced phytotoxicity. Participates in melatonin-mediated detoxification. The protein is Catalase isozyme C of Oryza sativa subsp. japonica (Rice).